We begin with the raw amino-acid sequence, 687 residues long: Probable intron-encoded endonuclease aI3 (687 aa).

A COX1 exons 1 to 3 encoded region spans residues 1 to 374 (MKQMSYVTRW…NASMDVAFHD (374 aa)). Transmembrane regions (helical) follow at residues 19–39 (IGMTYLGFGMLSAMMGTGMSV), 69–89 (LLMMFFFIMPVWMGAFGNFFL), 103–123 (LNNISFWCLPPALVCMVCSVL), 152–172 (AMFAMHLTSMSSLLGAMNFMV), 188–208 (PLFAWAMFLTAMLLLLSLPVL), 240–260 (LFWFFGHPEVYILMMPGFGVM), 273–293 (FGEMGMLYAMGSIGFLGFLVW), 315–335 (MVIAVPTGIKIFSWLATIYGG), 341–361 (VPMLFALGFLFLFTMGGLTGV), and 376–396 (IFIYYVSFFLYTLYNMYNNYT). A COX1 intron 3 encoded region spans residues 375 to 687 (RIFIYYVSFF…KKESLMKFLK (313 aa)).

In the C-terminal section; belongs to the LAGLIDADG endonuclease family. The protein in the N-terminal section; belongs to the heme-copper respiratory oxidase family. The mature protein may arise from proteolytic cleavage of an in-frame translation of COX1 exons 1 to 3 plus intron 3, containing the aI3 open reading frame.

The protein resides in the mitochondrion. It localises to the membrane. Functionally, mitochondrial DNA endonuclease involved in intron homing. In Debaryomyces hansenii (strain ATCC 36239 / CBS 767 / BCRC 21394 / JCM 1990 / NBRC 0083 / IGC 2968) (Yeast), this protein is Probable intron-encoded endonuclease aI3 (aI3).